Consider the following 364-residue polypeptide: Fructose-bisphosphate aldolase A (364 aa).

Tyr5 carries the post-translational modification Phosphotyrosine. Phosphothreonine is present on Thr9. Ser36 and Ser39 each carry phosphoserine. Lys42 carries the N6-acetyllysine; alternate modification. Residue Lys42 forms a Glycyl lysine isopeptide (Lys-Gly) (interchain with G-Cter in SUMO1); alternate linkage. Lys42 is covalently cross-linked (Glycyl lysine isopeptide (Lys-Gly) (interchain with G-Cter in SUMO2); alternate). Beta-D-fructose 1,6-bisphosphate is bound at residue Arg43. Ser46 carries the post-translational modification Phosphoserine. An N6-(2-hydroxyisobutyryl)lysine modification is found at Lys99. Lys108 carries the post-translational modification N6-acetyllysine. Lys111 bears the N6-acetyllysine; alternate mark. At Lys111 the chain carries N6-malonyllysine; alternate. Position 132 is a phosphoserine (Ser132). Lys147 is subject to N6-(2-hydroxyisobutyryl)lysine. Glu188 serves as the catalytic Proton acceptor. Lys230 acts as the Schiff-base intermediate with dihydroxyacetone-P in catalysis. Residue Ser272 is modified to Phosphoserine. Residues 272 to 274, Ser301, and Arg304 each bind beta-D-fructose 1,6-bisphosphate; that span reads SGG. N6-malonyllysine is present on Lys312. Lys330 bears the N6-acetyllysine mark.

This sequence belongs to the class I fructose-bisphosphate aldolase family. In terms of assembly, homotetramer. Interacts with SNX9 and WAS. Interacts with FBP2; the interaction blocks FBP2 inhibition by physiological concentrations of AMP and reduces inhibition by Ca(2+).

It is found in the cytoplasm. It localises to the myofibril. Its subcellular location is the sarcomere. The protein localises to the i band. The protein resides in the m line. The catalysed reaction is beta-D-fructose 1,6-bisphosphate = D-glyceraldehyde 3-phosphate + dihydroxyacetone phosphate. It participates in carbohydrate degradation; glycolysis; D-glyceraldehyde 3-phosphate and glycerone phosphate from D-glucose: step 4/4. In terms of biological role, catalyzes the reversible conversion of beta-D-fructose 1,6-bisphosphate (FBP) into two triose phosphate and plays a key role in glycolysis and gluconeogenesis. In addition, may also function as scaffolding protein. This chain is Fructose-bisphosphate aldolase A, found in Homo sapiens (Human).